Reading from the N-terminus, the 140-residue chain is Putative nickel-responsive regulator (140 aa).

Positions 81, 92, 94, and 100 each coordinate Ni(2+).

It belongs to the transcriptional regulatory CopG/NikR family. It depends on Ni(2+) as a cofactor.

In terms of biological role, transcriptional regulator. This is Putative nickel-responsive regulator from Methanothrix thermoacetophila (strain DSM 6194 / JCM 14653 / NBRC 101360 / PT) (Methanosaeta thermophila).